The following is a 503-amino-acid chain: Probable cytosol aminopeptidase (503 aa).

Mn(2+) is bound by residues lysine 270 and aspartate 275. Lysine 282 is a catalytic residue. Residues aspartate 293, aspartate 352, and glutamate 354 each coordinate Mn(2+). Residue arginine 356 is part of the active site.

It belongs to the peptidase M17 family. Mn(2+) serves as cofactor.

Its subcellular location is the cytoplasm. The enzyme catalyses Release of an N-terminal amino acid, Xaa-|-Yaa-, in which Xaa is preferably Leu, but may be other amino acids including Pro although not Arg or Lys, and Yaa may be Pro. Amino acid amides and methyl esters are also readily hydrolyzed, but rates on arylamides are exceedingly low.. The catalysed reaction is Release of an N-terminal amino acid, preferentially leucine, but not glutamic or aspartic acids.. In terms of biological role, presumably involved in the processing and regular turnover of intracellular proteins. Catalyzes the removal of unsubstituted N-terminal amino acids from various peptides. This is Probable cytosol aminopeptidase from Edwardsiella ictaluri (strain 93-146).